The following is a 201-amino-acid chain: Dephospho-CoA kinase (201 aa).

One can recognise a DPCK domain in the interval 7–201; it reads AIALSGGIGT…IETIKKDFHV (195 aa). 15–20 serves as a coordination point for ATP; sequence GTGKST.

Belongs to the CoaE family.

The protein resides in the cytoplasm. It carries out the reaction 3'-dephospho-CoA + ATP = ADP + CoA + H(+). It participates in cofactor biosynthesis; coenzyme A biosynthesis; CoA from (R)-pantothenate: step 5/5. In terms of biological role, catalyzes the phosphorylation of the 3'-hydroxyl group of dephosphocoenzyme A to form coenzyme A. The chain is Dephospho-CoA kinase from Wolinella succinogenes (strain ATCC 29543 / DSM 1740 / CCUG 13145 / JCM 31913 / LMG 7466 / NCTC 11488 / FDC 602W) (Vibrio succinogenes).